The primary structure comprises 106 residues: Iron-sulfur cluster assembly protein CyaY (106 aa).

This sequence belongs to the frataxin family.

Its function is as follows. Involved in iron-sulfur (Fe-S) cluster assembly. May act as a regulator of Fe-S biogenesis. This is Iron-sulfur cluster assembly protein CyaY from Shigella flexneri serotype 5b (strain 8401).